The following is a 288-amino-acid chain: UPF0494 membrane protein C212.04c (288 aa).

4 helical membrane passes run 107–127 (WVLL…KFKI), 144–164 (IWGP…AFNY), 174–194 (PLIS…SVII), and 198–218 (IAGV…GVIA).

This sequence belongs to the UPF0494 family.

It localises to the cytoplasm. The protein resides in the endoplasmic reticulum. The protein localises to the membrane. This chain is UPF0494 membrane protein C212.04c, found in Schizosaccharomyces pombe (strain 972 / ATCC 24843) (Fission yeast).